The following is a 669-amino-acid chain: MSKEIAKKRIEELRDLLNTFNYQYHVLDNPSVSDAEYDRNMQELIKLEAENPEFMSEDSPSVRVGGTVLDIFEKVTHKSPMLSLGNAFNEGDLRDFDRRVRQGIDDANVRYICELKIDGLAVSLHYEKGRFIQGATRGDGVTGEDITQNLKTIKAIPLRLNEEVTLEARGEAYMPKRSFVKLNEEKEQNGEDVFANPRNAAAGSIRQLDPKIAAKRNLSMFVYGLANVEEKTIPSHSESLDFLGELGFKTNPNRRTCETIEEVIAYVEEWQEKRPHLDYEIDGIVIKVDDVALQESLGTTAKSPRWAIAYKFPAEEVVTRLTGIELSVGRTGVVTPTAELEPVRVAGTIVRRASLHNEDLIREKDIRIGDYVVVKKAGDIIPEVVNVIFDKRTGEEEEYHMPTHCPACESELVRLEEEVALRCINPTCPAQIREGLIHFVSRNAMNIDGLGERVITQLFDADYIRTFADLYSLTKEQLLQLERFGEKSATNLVQAIENSKENSLERLLFGLGIRHVGAKAARTFAEHFETMDALVKATEEELKAINEIGEKMAQSVVAYFDNEDVLELLQQFKEYGVNMTYKGIKIADLQNVESYFAGKTVVLTGKLEVMGRSEAKKKIEALGGKVTGSVSKSTDLVVAGEAAGSKLAQAEKHNVEVWNEERFLQELNK.

Residues 34–38 (DAEYD), 83–84 (SL), and glutamate 114 contribute to the NAD(+) site. Lysine 116 functions as the N6-AMP-lysine intermediate in the catalytic mechanism. Residues arginine 137, glutamate 171, lysine 287, and lysine 311 each coordinate NAD(+). The Zn(2+) site is built by cysteine 405, cysteine 408, cysteine 423, and cysteine 428. Residues 591 to 669 (NVESYFAGKT…EERFLQELNK (79 aa)) form the BRCT domain.

It belongs to the NAD-dependent DNA ligase family. LigA subfamily. Mg(2+) is required as a cofactor. It depends on Mn(2+) as a cofactor.

It catalyses the reaction NAD(+) + (deoxyribonucleotide)n-3'-hydroxyl + 5'-phospho-(deoxyribonucleotide)m = (deoxyribonucleotide)n+m + AMP + beta-nicotinamide D-nucleotide.. Functionally, DNA ligase that catalyzes the formation of phosphodiester linkages between 5'-phosphoryl and 3'-hydroxyl groups in double-stranded DNA using NAD as a coenzyme and as the energy source for the reaction. It is essential for DNA replication and repair of damaged DNA. The polypeptide is DNA ligase (Bacillus cereus (strain 03BB102)).